An 845-amino-acid chain; its full sequence is Taste receptor type 1 member 3 (845 aa).

The first 18 residues, 1 to 18 (MAGLMLLSLMALLGLGAG), serve as a signal peptide directing secretion. Over 19-568 (APLCLSRQLR…FLAWGQPAVL (550 aa)) the chain is Extracellular. N-linked (GlcNAc...) asparagine glycans are attached at residues Asn-128 and Asn-262. A helical transmembrane segment spans residues 569-589 (VLLILLALALGLVLVALGLFI). Over 590-601 (RHRDSPLVQASG) the chain is Cytoplasmic. Residues 602-622 (GPRACFGLACLGLVCLSVLLF) traverse the membrane as a helical segment. Topologically, residues 623–637 (PGQPGPASCLAQQPL) are extracellular. A helical membrane pass occupies residues 638–658 (LHLPLTGCLSTLFLQAAQIFV). The Cytoplasmic portion of the chain corresponds to 659–680 (GSELPSSWADQLRRCLQGPWAW). A helical transmembrane segment spans residues 681-701 (LLVLLALLAEAALCAWYLVAF). Residues 702-727 (PPEVVTDWWVLPTQVLVHCRMRSWIS) lie on the Extracellular side of the membrane. The helical transmembrane segment at 728-748 (FGLLHAINAMLAFLCFLGTFL) threads the bilayer. At 749–760 (VQSRPGRYNGAR) the chain is on the cytoplasmic side. Residues 761-781 (GLTFAMLAYFITWISFVPLFA) traverse the membrane as a helical segment. Over 782 to 789 (NVHVAYQP) the chain is Extracellular. The chain crosses the membrane as a helical span at residues 790–810 (TVQMAAILLCALGILATFHLP). At 811-845 (KCYLLLQQLELNNPEFFLGDDARGQGSSGSGGKET) the chain is on the cytoplasmic side.

It belongs to the G-protein coupled receptor 3 family. TAS1R subfamily. As to quaternary structure, forms homodimers or heterodimers with TAS1R1 and TAS1R2.

The protein localises to the cell membrane. Functionally, putative taste receptor. TAS1R1/TAS1R3 responds to the umami taste stimulus (the taste of monosodium glutamate). TAS1R2/TAS1R3 recognizes diverse natural and synthetic sweeteners. TAS1R3 is essential for the recognition and response to the disaccharide trehalose. Sequence differences within and between species can significantly influence the selectivity and specificity of taste responses. The sequence is that of Taste receptor type 1 member 3 (TAS1R3) from Canis lupus familiaris (Dog).